Reading from the N-terminus, the 103-residue chain is Flagellar hook-basal body complex protein FliE (103 aa).

The protein belongs to the FliE family.

The protein resides in the bacterial flagellum basal body. This chain is Flagellar hook-basal body complex protein FliE, found in Yersinia pestis.